A 156-amino-acid chain; its full sequence is ATP synthase subunit b (156 aa).

Residues 11–31 (LIAFVVFVIFCMKYVWPPIIG) traverse the membrane as a helical segment.

It belongs to the ATPase B chain family. In terms of assembly, F-type ATPases have 2 components, F(1) - the catalytic core - and F(0) - the membrane proton channel. F(1) has five subunits: alpha(3), beta(3), gamma(1), delta(1), epsilon(1). F(0) has three main subunits: a(1), b(2) and c(10-14). The alpha and beta chains form an alternating ring which encloses part of the gamma chain. F(1) is attached to F(0) by a central stalk formed by the gamma and epsilon chains, while a peripheral stalk is formed by the delta and b chains.

It is found in the cell inner membrane. In terms of biological role, f(1)F(0) ATP synthase produces ATP from ADP in the presence of a proton or sodium gradient. F-type ATPases consist of two structural domains, F(1) containing the extramembraneous catalytic core and F(0) containing the membrane proton channel, linked together by a central stalk and a peripheral stalk. During catalysis, ATP synthesis in the catalytic domain of F(1) is coupled via a rotary mechanism of the central stalk subunits to proton translocation. Component of the F(0) channel, it forms part of the peripheral stalk, linking F(1) to F(0). In Colwellia psychrerythraea (strain 34H / ATCC BAA-681) (Vibrio psychroerythus), this protein is ATP synthase subunit b.